Here is a 1400-residue protein sequence, read N- to C-terminus: DNA-directed RNA polymerase subunit beta' (1400 aa).

Zn(2+) is bound by residues cysteine 71, cysteine 73, cysteine 86, and cysteine 89. 3 residues coordinate Mg(2+): aspartate 462, aspartate 464, and aspartate 466. Residues cysteine 811, cysteine 885, cysteine 892, and cysteine 895 each contribute to the Zn(2+) site.

The protein belongs to the RNA polymerase beta' chain family. The RNAP catalytic core consists of 2 alpha, 1 beta, 1 beta' and 1 omega subunit. When a sigma factor is associated with the core the holoenzyme is formed, which can initiate transcription. It depends on Mg(2+) as a cofactor. Zn(2+) is required as a cofactor.

It catalyses the reaction RNA(n) + a ribonucleoside 5'-triphosphate = RNA(n+1) + diphosphate. Its function is as follows. DNA-dependent RNA polymerase catalyzes the transcription of DNA into RNA using the four ribonucleoside triphosphates as substrates. This is DNA-directed RNA polymerase subunit beta' from Brucella suis biovar 1 (strain 1330).